A 328-amino-acid chain; its full sequence is dITP/XTP pyrophosphatase (328 aa).

Residues 1-129 form a unknown region; the sequence is MSEKIYEYKD…ATSEQGFGDI (129 aa). The interval 130–324 is NTP pyrophosphatase; it reads ILIATRNEGK…KLMEVFPAWQ (195 aa). A substrate-binding site is contributed by 134 to 139; it reads TRNEGK. Asp196 serves as the catalytic Proton acceptor. Asp196 provides a ligand contact to Mg(2+). Substrate-binding positions include Ser197, 280–283, Lys303, and 308–309; these read FGYD and HR.

The protein belongs to the HAM1 NTPase family. Homodimer. Requires Mg(2+) as cofactor.

The catalysed reaction is XTP + H2O = XMP + diphosphate + H(+). The enzyme catalyses dITP + H2O = dIMP + diphosphate + H(+). It carries out the reaction ITP + H2O = IMP + diphosphate + H(+). Pyrophosphatase that catalyzes the hydrolysis of nucleoside triphosphates to their monophosphate derivatives, with a high preference for the non-canonical purine nucleotides XTP (xanthosine triphosphate), dITP (deoxyinosine triphosphate) and ITP. Seems to function as a house-cleaning enzyme that removes non-canonical purine nucleotides from the nucleotide pool, thus preventing their incorporation into DNA/RNA and avoiding chromosomal lesions. The sequence is that of dITP/XTP pyrophosphatase from Streptococcus pyogenes serotype M1.